A 365-amino-acid polypeptide reads, in one-letter code: Cobalt-precorrin-5B C(1)-methyltransferase (365 aa).

This sequence belongs to the CbiD family.

It carries out the reaction Co-precorrin-5B + S-adenosyl-L-methionine = Co-precorrin-6A + S-adenosyl-L-homocysteine. The protein operates within cofactor biosynthesis; adenosylcobalamin biosynthesis; cob(II)yrinate a,c-diamide from sirohydrochlorin (anaerobic route): step 6/10. Its function is as follows. Catalyzes the methylation of C-1 in cobalt-precorrin-5B to form cobalt-precorrin-6A. In Polaromonas naphthalenivorans (strain CJ2), this protein is Cobalt-precorrin-5B C(1)-methyltransferase.